A 378-amino-acid polypeptide reads, in one-letter code: Odorant receptor 33a (378 aa).

Residues 1–33 (MDSRRKVRSENLYKTYWLYWRLLGVEGDYPFRR) lie on the Cytoplasmic side of the membrane. The chain crosses the membrane as a helical span at residues 34–54 (LVDFTITSFITILFPVHLILG). The Extracellular portion of the chain corresponds to 55 to 62 (MYKKPQIQ). Residues 63–83 (VFRSLHFTSECLFCSYKFFCF) traverse the membrane as a helical segment. Over 84–127 (RWKLKEIKTIEGLLQDLDSRVESEEERNYFNQNPSRVARMLSKS) the chain is Cytoplasmic. Residues 128–148 (YLVAAISAIITATVAGLFSTG) form a helical membrane-spanning segment. At 149–163 (RNLMYLGWFPYDFQA) the chain is on the extracellular side. A helical membrane pass occupies residues 164 to 184 (TAAIYWISFSYQAIGSSLLIL). Over 185 to 254 (ENLANDSYPP…LLRSTLHLSQ (70 aa)) the chain is Cytoplasmic. Residues 255 to 275 (LGQFLSSGINISITLINILFF) traverse the membrane as a helical segment. At 276–285 (AENNFAMLYY) the chain is on the extracellular side. A helical transmembrane segment spans residues 286-306 (AVFFAAMLIELFPSCYYGILM). The Cytoplasmic portion of the chain corresponds to 307–355 (TMEFDKLPYAIFSSNWLKMDKRYNRSLIILMQLTLVPVNIKAGGIVGID). A helical transmembrane segment spans residues 356 to 376 (MSAFFATVRMAYSFYTLALSF). Residues 377–378 (RV) lie on the Extracellular side of the membrane.

Belongs to the insect chemoreceptor superfamily. Heteromeric odorant receptor channel (TC 1.A.69) family. Or2a subfamily. As to quaternary structure, interacts with Orco. Complexes exist early in the endomembrane system in olfactory sensory neurons (OSNs), coupling these complexes to the conserved ciliary trafficking pathway. Expressed in 1-2 cells on the distal edge of the antenna but not the maxillary palp.

It is found in the cell membrane. In terms of biological role, odorant receptor which mediates acceptance or avoidance behavior, depending on its substrates. The odorant receptor repertoire encodes a large collection of odor stimuli that vary widely in identity, intensity, and duration. May form a complex with Orco to form odorant-sensing units, providing sensitive and prolonged odorant signaling and calcium permeability. The sequence is that of Odorant receptor 33a (Or33a) from Drosophila melanogaster (Fruit fly).